We begin with the raw amino-acid sequence, 120 residues long: Dynein 11 kDa light chain, flagellar outer arm (120 aa).

Belongs to the dynein light chain family. As to quaternary structure, consists of at least 3 heavy chains (alpha, beta and gamma), 2 intermediate chains and 8 light chains.

It localises to the cytoplasm. The protein resides in the cytoskeleton. It is found in the flagellum axoneme. This chain is Dynein 11 kDa light chain, flagellar outer arm, found in Chlamydomonas reinhardtii (Chlamydomonas smithii).